The primary structure comprises 506 residues: Galactose/methyl galactoside import ATP-binding protein MglA (506 aa).

ABC transporter domains follow at residues Leu-14 to Glu-249 and Val-264 to Leu-506. Gly-46–Ser-53 contacts ATP.

This sequence belongs to the ABC transporter superfamily. Galactose/methyl galactoside importer (TC 3.A.1.2.3) family. In terms of assembly, the complex is composed of one ATP-binding protein (MglA), two transmembrane proteins (MglC) and a solute-binding protein (MglB).

Its subcellular location is the cell inner membrane. It carries out the reaction D-galactose(out) + ATP + H2O = D-galactose(in) + ADP + phosphate + H(+). The enzyme catalyses methyl beta-D-galactoside(out) + ATP + H2O = methyl beta-D-galactoside(in) + ADP + phosphate + H(+). In terms of biological role, part of the ABC transporter complex MglABC involved in galactose/methyl galactoside import. Responsible for energy coupling to the transport system. In Mannheimia succiniciproducens (strain KCTC 0769BP / MBEL55E), this protein is Galactose/methyl galactoside import ATP-binding protein MglA.